We begin with the raw amino-acid sequence, 78 residues long: UPF0291 protein ABC2165 (78 aa).

The tract at residues 56–78 is disordered; sequence AKGNDVTPQKLKDSKAQKHKRLH.

This sequence belongs to the UPF0291 family.

It localises to the cytoplasm. In Shouchella clausii (strain KSM-K16) (Alkalihalobacillus clausii), this protein is UPF0291 protein ABC2165.